Consider the following 81-residue polypeptide: Defensin-like protein 266 (81 aa).

An N-terminal signal peptide occupies residues 1–26; that stretch reads MEKIVFRKIVFVAFLLSLSCLLEGEA. 3 cysteine pairs are disulfide-bonded: C40-C58, C46-C63, and C50-C65.

The protein belongs to the DEFL family.

It is found in the secreted. The polypeptide is Defensin-like protein 266 (Arabidopsis thaliana (Mouse-ear cress)).